The primary structure comprises 364 residues: Histidinol-phosphate aminotransferase (364 aa).

K220 is modified (N6-(pyridoxal phosphate)lysine).

Belongs to the class-II pyridoxal-phosphate-dependent aminotransferase family. Histidinol-phosphate aminotransferase subfamily. Homodimer. Requires pyridoxal 5'-phosphate as cofactor.

It carries out the reaction L-histidinol phosphate + 2-oxoglutarate = 3-(imidazol-4-yl)-2-oxopropyl phosphate + L-glutamate. The protein operates within amino-acid biosynthesis; L-histidine biosynthesis; L-histidine from 5-phospho-alpha-D-ribose 1-diphosphate: step 7/9. This is Histidinol-phosphate aminotransferase from Stenotrophomonas maltophilia (strain R551-3).